We begin with the raw amino-acid sequence, 50 residues long: MLLPATMSDKPDMAEIEKFDKSKLKKTETQEKNPLPSKETIEQEKQAGES.

Residues 1 to 50 (MLLPATMSDKPDMAEIEKFDKSKLKKTETQEKNPLPSKETIEQEKQAGES) are disordered. The residue at position 8 (Ser-8) is a Phosphoserine. Basic and acidic residues predominate over residues 9-31 (DKPDMAEIEKFDKSKLKKTETQE). N6-acetyllysine is present on Lys-10. Residue Lys-18 is modified to N6-acetyllysine; alternate. Lys-18 is covalently cross-linked (Glycyl lysine isopeptide (Lys-Gly) (interchain with G-Cter in SUMO2); alternate). Phosphothreonine is present on Thr-29. An N6-acetyllysine modification is found at Lys-32. At Ser-37 the chain carries Phosphoserine. Lys-38 carries the post-translational modification N6-acetyllysine. Over residues 39–50 (ETIEQEKQAGES) the composition is skewed to basic and acidic residues. A Phosphothreonine modification is found at Thr-40. At Lys-45 the chain carries N6-acetyllysine.

This sequence belongs to the thymosin beta family. Identified in a complex composed of ACTA1, COBL, GSN AND TMSB4X. Interacts with SERPINB1. In terms of processing, acSDKP is inactivated by ACE, which removes the dipeptide Lys-Pro from its C-terminus. As to expression, originally found in thymus but it is widely distributed in many tissues.

The protein resides in the cytoplasm. It localises to the cytoskeleton. Its function is as follows. Plays an important role in the organization of the cytoskeleton. Binds to and sequesters actin monomers (G actin) and therefore inhibits actin polymerization. Functionally, potent inhibitor of bone marrow derived stem cell differentiation. Acts by inhibits the entry of hematopoietic pluripotent stem cells into the S-phase. In Mus musculus (Mouse), this protein is Thymosin beta-4 (Tmsb4x).